Here is a 494-residue protein sequence, read N- to C-terminus: One cut domain family member 3 (494 aa).

Disordered regions lie at residues alanine 130 to alanine 162, leucine 199 to leucine 239, and alanine 295 to glutamate 319. Composition is skewed to pro residues over residues alanine 148–glutamine 158 and proline 214–leucine 225. Residues glycine 297 to serine 313 are compositionally biased toward gly residues. Positions proline 312–alanine 398 form a DNA-binding region, CUT. Positions proline 414–tryptophan 473 form a DNA-binding region, homeobox. Residues glutamate 475–alanine 494 form a disordered region. Residues glutamate 476–alanine 494 show a composition bias toward low complexity.

It belongs to the CUT homeobox family.

Its subcellular location is the nucleus. Its function is as follows. Transcriptional activator. Binds the consensus DNA sequence 5'-DHWATTGAYTWWD-3' on a variety of gene promoters such as those of HNF3B and TTR. This chain is One cut domain family member 3 (ONECUT3), found in Homo sapiens (Human).